Reading from the N-terminus, the 228-residue chain is Protein GrpE (228 aa).

2 disordered regions span residues 1 to 31 and 209 to 228; these read MADEKNKSQNPDLEQRDINNPRDREALNRAA and GVSKGGPKATADNGASEGNG.

Belongs to the GrpE family. Homodimer.

The protein resides in the cytoplasm. Participates actively in the response to hyperosmotic and heat shock by preventing the aggregation of stress-denatured proteins, in association with DnaK and GrpE. It is the nucleotide exchange factor for DnaK and may function as a thermosensor. Unfolded proteins bind initially to DnaJ; upon interaction with the DnaJ-bound protein, DnaK hydrolyzes its bound ATP, resulting in the formation of a stable complex. GrpE releases ADP from DnaK; ATP binding to DnaK triggers the release of the substrate protein, thus completing the reaction cycle. Several rounds of ATP-dependent interactions between DnaJ, DnaK and GrpE are required for fully efficient folding. This Brucella anthropi (strain ATCC 49188 / DSM 6882 / CCUG 24695 / JCM 21032 / LMG 3331 / NBRC 15819 / NCTC 12168 / Alc 37) (Ochrobactrum anthropi) protein is Protein GrpE.